The primary structure comprises 255 residues: Imidazole glycerol phosphate synthase subunit HisF (255 aa).

Active-site residues include D12 and D131.

It belongs to the HisA/HisF family. As to quaternary structure, heterodimer of HisH and HisF.

Its subcellular location is the cytoplasm. The catalysed reaction is 5-[(5-phospho-1-deoxy-D-ribulos-1-ylimino)methylamino]-1-(5-phospho-beta-D-ribosyl)imidazole-4-carboxamide + L-glutamine = D-erythro-1-(imidazol-4-yl)glycerol 3-phosphate + 5-amino-1-(5-phospho-beta-D-ribosyl)imidazole-4-carboxamide + L-glutamate + H(+). Its pathway is amino-acid biosynthesis; L-histidine biosynthesis; L-histidine from 5-phospho-alpha-D-ribose 1-diphosphate: step 5/9. In terms of biological role, IGPS catalyzes the conversion of PRFAR and glutamine to IGP, AICAR and glutamate. The HisF subunit catalyzes the cyclization activity that produces IGP and AICAR from PRFAR using the ammonia provided by the HisH subunit. The polypeptide is Imidazole glycerol phosphate synthase subunit HisF (Zymomonas mobilis subsp. mobilis (strain ATCC 31821 / ZM4 / CP4)).